A 709-amino-acid polypeptide reads, in one-letter code: Catalase HPII (709 aa).

Polar residues predominate over residues 1–26; sequence MSEQNNEQRSQAAGTDTVDRGNSNAK. Residues 1–32 are disordered; it reads MSEQNNEQRSQAAGTDTVDRGNSNAKLEQLEA. Catalysis depends on residues His-90 and Asn-163. Position 377 (Tyr-377) interacts with heme. The segment at 419 to 443 is disordered; the sequence is RASYEPNSIDGGWPKETPPAARNGG.

It belongs to the catalase family. HPII subfamily. Heme is required as a cofactor.

The protein resides in the cytoplasm. The enzyme catalyses 2 H2O2 = O2 + 2 H2O. Its function is as follows. Decomposes hydrogen peroxide into water and oxygen; serves to protect cells from the toxic effects of hydrogen peroxide. The polypeptide is Catalase HPII (katE) (Pseudomonas aeruginosa (strain ATCC 15692 / DSM 22644 / CIP 104116 / JCM 14847 / LMG 12228 / 1C / PRS 101 / PAO1)).